Consider the following 597-residue polypeptide: Exochitinase 1 (597 aa).

The segment at residues 1 to 29 (MDRFRPLAVLIAAALTLSGTTALSSAARA) is a signal peptide (or 32). The Fibronectin type-III domain maps to 172 to 253 (PPTGLRTGSV…ATVTATTAPG (82 aa)). The 334-residue stretch at 264–597 (HALVGYLHAS…FQRTFDGYFG (334 aa)) folds into the GH18 domain. The active-site Proton donor is the Glu384.

The protein belongs to the glycosyl hydrolase 18 family. Chitinase class II subfamily. In terms of processing, the N-terminus is blocked.

The enzyme catalyses Random endo-hydrolysis of N-acetyl-beta-D-glucosaminide (1-&gt;4)-beta-linkages in chitin and chitodextrins.. Its activity is regulated as follows. Inhibited by the pseudosugar allosamidin A. Exochitinase that generates exclusively chitobiose from chitotetraose, chitohexaose, and colloidal high-molecular mass chitin. The polypeptide is Exochitinase 1 (chi01) (Streptomyces olivaceoviridis (Streptomyces corchorusii)).